Here is a 311-residue protein sequence, read N- to C-terminus: Tyrosine recombinase XerD (311 aa).

The 83-residue stretch at 1–83 (MEFIAQFLEM…TIKSYYAFLI (83 aa)) folds into the Core-binding (CB) domain. Positions 104–299 (KLPIILSIDQ…HTNHLKKALL (196 aa)) constitute a Tyr recombinase domain. Catalysis depends on residues R145, K176, H251, R254, and H277. Catalysis depends on Y286, which acts as the O-(3'-phospho-DNA)-tyrosine intermediate.

It belongs to the 'phage' integrase family. XerD subfamily. Forms a cyclic heterotetrameric complex composed of two molecules of XerC and two molecules of XerD.

The protein resides in the cytoplasm. Functionally, site-specific tyrosine recombinase, which acts by catalyzing the cutting and rejoining of the recombining DNA molecules. The XerC-XerD complex is essential to convert dimers of the bacterial chromosome into monomers to permit their segregation at cell division. It also contributes to the segregational stability of plasmids. This Rickettsia prowazekii (strain Madrid E) protein is Tyrosine recombinase XerD.